A 30-amino-acid chain; its full sequence is Thermophilic aminopeptidase 1 alpha chain (30 aa).

The protein belongs to the peptidase M42 family. As to quaternary structure, 12 chains of two different but homologous types, alpha and beta, which can combine in various ratios. A divalent metal cation is required as a cofactor.

Its function is as follows. Metalloenzyme of broad specificity, releasing all N-terminal amino acids. The protein is Thermophilic aminopeptidase 1 alpha chain of Geobacillus stearothermophilus (Bacillus stearothermophilus).